We begin with the raw amino-acid sequence, 148 residues long: Small ribosomal subunit protein uS12 (148 aa).

The protein belongs to the universal ribosomal protein uS12 family. In terms of assembly, part of the 30S ribosomal subunit.

Functionally, with S4 and S5 plays an important role in translational accuracy. Located at the interface of the 30S and 50S subunits. The polypeptide is Small ribosomal subunit protein uS12 (Methanocaldococcus jannaschii (strain ATCC 43067 / DSM 2661 / JAL-1 / JCM 10045 / NBRC 100440) (Methanococcus jannaschii)).